The following is a 96-amino-acid chain: Large ribosomal subunit protein uL23 (96 aa).

This sequence belongs to the universal ribosomal protein uL23 family. As to quaternary structure, part of the 50S ribosomal subunit. Contacts protein L29, and trigger factor when it is bound to the ribosome.

In terms of biological role, one of the early assembly proteins it binds 23S rRNA. One of the proteins that surrounds the polypeptide exit tunnel on the outside of the ribosome. Forms the main docking site for trigger factor binding to the ribosome. The sequence is that of Large ribosomal subunit protein uL23 from Nitratidesulfovibrio vulgaris (strain DSM 19637 / Miyazaki F) (Desulfovibrio vulgaris).